A 1342-amino-acid polypeptide reads, in one-letter code: DNA-directed RNA polymerase subunit beta (1342 aa).

This sequence belongs to the RNA polymerase beta chain family. As to quaternary structure, the RNAP catalytic core consists of 2 alpha, 1 beta, 1 beta' and 1 omega subunit. When a sigma factor is associated with the core the holoenzyme is formed, which can initiate transcription.

The catalysed reaction is RNA(n) + a ribonucleoside 5'-triphosphate = RNA(n+1) + diphosphate. Functionally, DNA-dependent RNA polymerase catalyzes the transcription of DNA into RNA using the four ribonucleoside triphosphates as substrates. This Actinobacillus pleuropneumoniae serotype 3 (strain JL03) protein is DNA-directed RNA polymerase subunit beta.